We begin with the raw amino-acid sequence, 308 residues long: tRNA pseudouridine synthase B (308 aa).

Aspartate 47 acts as the Nucleophile in catalysis.

This sequence belongs to the pseudouridine synthase TruB family. Type 1 subfamily.

The enzyme catalyses uridine(55) in tRNA = pseudouridine(55) in tRNA. Its function is as follows. Responsible for synthesis of pseudouridine from uracil-55 in the psi GC loop of transfer RNAs. The chain is tRNA pseudouridine synthase B from Rhodospirillum rubrum (strain ATCC 11170 / ATH 1.1.1 / DSM 467 / LMG 4362 / NCIMB 8255 / S1).